Consider the following 413-residue polypeptide: Divalent metal cation transporter MntH (413 aa).

The next 11 helical transmembrane spans lie at 19 to 39, 46 to 66, 94 to 114, 122 to 142, 156 to 176, 196 to 216, 241 to 261, 290 to 310, 329 to 349, 350 to 370, and 392 to 412; these read LALMGPAFVAAIGYIDPGNFA, ASFGYQLLWVVVWANLMAMLI, VWFYWVQAEIIAMATDLAEFI, LVLGVSLLQGAVLTGVATFLI, VIGGLLLFVAVAYVVELIFSQ, AVFLAAGVLGATIMPHVIYLH, IAMTIAGFVNLAMMATAAAAF, IFGLSLVAAGLSSTVVGTLAG, AVTMLPSFVVILLGLDPTRIL, VMSQVLLSFGIALALVPLLIF, and VIVAIVVSLNGWLIVGSLLGV.

Belongs to the NRAMP family.

The protein resides in the cell inner membrane. Functionally, h(+)-stimulated, divalent metal cation uptake system. In Klebsiella pneumoniae (strain 342), this protein is Divalent metal cation transporter MntH.